Reading from the N-terminus, the 110-residue chain is Large ribosomal subunit protein P2C (110 aa).

The interval 83-110 is disordered; the sequence is APAAEEAAKEEAKEEEESDEDMGFGLFD. The span at 95–104 shows a compositional bias: acidic residues; sequence KEEEESDEDM. Serine 100 is modified (phosphoserine).

The protein belongs to the eukaryotic ribosomal protein P1/P2 family. As to quaternary structure, component of the large ribosomal subunit (LSU). Mature yeast ribosomes consist of a small (40S) and a large (60S) subunit. The 40S small subunit contains 1 molecule of ribosomal RNA (18S rRNA) and at least 33 different proteins. The large 60S subunit contains 3 rRNA molecules (25S, 5.8S and 5S rRNA) and at least 46 different proteins. The acidic ribosomal P-proteins form the stalk structure of the 60S subunit. They are organized as a pentameric complex in which uL10/P0 interacts with 2 heterodimers of P1 and P2 proteins.

The protein localises to the cytoplasm. In terms of biological role, component of the ribosome, a large ribonucleoprotein complex responsible for the synthesis of proteins in the cell. The small ribosomal subunit (SSU) binds messenger RNAs (mRNAs) and translates the encoded message by selecting cognate aminoacyl-transfer RNA (tRNA) molecules. The large subunit (LSU) contains the ribosomal catalytic site termed the peptidyl transferase center (PTC), which catalyzes the formation of peptide bonds, thereby polymerizing the amino acids delivered by tRNAs into a polypeptide chain. The nascent polypeptides leave the ribosome through a tunnel in the LSU and interact with protein factors that function in enzymatic processing, targeting, and the membrane insertion of nascent chains at the exit of the ribosomal tunnel. This is Large ribosomal subunit protein P2C (rpp203) from Schizosaccharomyces pombe (strain 972 / ATCC 24843) (Fission yeast).